The chain runs to 266 residues: Thymidylate synthase (266 aa).

Position 24 (Arg-24) interacts with dUMP. His-54 provides a ligand contact to (6R)-5,10-methylene-5,6,7,8-tetrahydrofolate. 129-130 (RR) lines the dUMP pocket. Catalysis depends on Cys-149, which acts as the Nucleophile. Residues 169 to 172 (RSAD), Asn-180, and 210 to 212 (HIY) each bind dUMP. (6R)-5,10-methylene-5,6,7,8-tetrahydrofolate is bound at residue Asp-172. Ala-265 provides a ligand contact to (6R)-5,10-methylene-5,6,7,8-tetrahydrofolate.

It belongs to the thymidylate synthase family. Bacterial-type ThyA subfamily. As to quaternary structure, homodimer.

It localises to the cytoplasm. The catalysed reaction is dUMP + (6R)-5,10-methylene-5,6,7,8-tetrahydrofolate = 7,8-dihydrofolate + dTMP. The protein operates within pyrimidine metabolism; dTTP biosynthesis. Its function is as follows. Catalyzes the reductive methylation of 2'-deoxyuridine-5'-monophosphate (dUMP) to 2'-deoxythymidine-5'-monophosphate (dTMP) while utilizing 5,10-methylenetetrahydrofolate (mTHF) as the methyl donor and reductant in the reaction, yielding dihydrofolate (DHF) as a by-product. This enzymatic reaction provides an intracellular de novo source of dTMP, an essential precursor for DNA biosynthesis. The polypeptide is Thymidylate synthase (Mycobacterium leprae (strain TN)).